The following is a 366-amino-acid chain: Mitogen-activated protein kinase p38a (366 aa).

The Protein kinase domain maps to 25–312; the sequence is YQDLQPVGSG…AEEALSHPYL (288 aa). Residues 31–39 and Lys54 each bind ATP; that span reads VGSGAYGQV. The active-site Proton acceptor is the Asp154. Thr184 bears the Phosphothreonine mark. A TXY motif is present at residues 184 to 186; that stretch reads TGY. Tyr186 is subject to Phosphotyrosine.

Belongs to the protein kinase superfamily. CMGC Ser/Thr protein kinase family. MAP kinase subfamily. It depends on Mg(2+) as a cofactor. Post-translationally, dually phosphorylated on Thr-184 and Tyr-186, which activates the enzyme.

It is found in the nucleus. The enzyme catalyses L-seryl-[protein] + ATP = O-phospho-L-seryl-[protein] + ADP + H(+). It carries out the reaction L-threonyl-[protein] + ATP = O-phospho-L-threonyl-[protein] + ADP + H(+). Activated by threonine and tyrosine phosphorylation by Mkk3 in response to environmental stress. Kinase involved in a signal transduction pathway. May down-regulate insect immunity gene expression after prolonged infection. The sequence is that of Mitogen-activated protein kinase p38a from Drosophila melanogaster (Fruit fly).